The following is a 925-amino-acid chain: Periplasmic nitrate reductase (925 aa).

The segment at residues 1–30 is a signal peptide (tat-type signal); that stretch reads MDRREFIKSSAAAAACSAAGIAVPSSLSAA. One can recognise a 4Fe-4S Mo/W bis-MGD-type domain in the interval 36 to 92; the sequence is WRWDKSACRFCGTGCGIMVATKNGKIVAVKGDPLAPVNRGLNCIKGYFNAKIMYGED. Residues Cys-43, Cys-46, Cys-50, and Cys-78 each coordinate [4Fe-4S] cluster. Mo-bis(molybdopterin guanine dinucleotide)-binding positions include Lys-80, Gln-148, Asn-173, Cys-177, 210 to 217, Met-418, Gln-422, Asn-528, 553 to 554, Lys-576, Asp-603, and 815 to 824; these read WGANMAEM, SD, and TGRVLEHWHS. Trp-891 serves as a coordination point for substrate. 2 residues coordinate Mo-bis(molybdopterin guanine dinucleotide): Asn-899 and Lys-916.

The protein belongs to the prokaryotic molybdopterin-containing oxidoreductase family. NasA/NapA/NarB subfamily. In terms of assembly, component of the periplasmic nitrate reductase NapAB complex composed of NapA and NapB. [4Fe-4S] cluster serves as cofactor. Requires Mo-bis(molybdopterin guanine dinucleotide) as cofactor. Predicted to be exported by the Tat system. The position of the signal peptide cleavage has not been experimentally proven.

It is found in the periplasm. The enzyme catalyses 2 Fe(II)-[cytochrome] + nitrate + 2 H(+) = 2 Fe(III)-[cytochrome] + nitrite + H2O. Its function is as follows. Catalytic subunit of the periplasmic nitrate reductase complex NapAB. Receives electrons from NapB and catalyzes the reduction of nitrate to nitrite. This chain is Periplasmic nitrate reductase, found in Campylobacter fetus subsp. fetus (strain 82-40).